A 215-amino-acid chain; its full sequence is NAD(P)H-hydrate epimerase (215 aa).

One can recognise a YjeF N-terminal domain in the interval 10–211; it reads AQRYDAHATN…DIGIYAQDRV (202 aa). 58–62 serves as a coordination point for (6S)-NADPHX; the sequence is NNGGD. Residues Asn59 and Asp121 each contribute to the K(+) site. (6S)-NADPHX is bound by residues 125 to 131 and Asp154; that span reads GVGLTRD. A K(+)-binding site is contributed by Ser157.

It belongs to the NnrE/AIBP family. K(+) serves as cofactor.

The catalysed reaction is (6R)-NADHX = (6S)-NADHX. It carries out the reaction (6R)-NADPHX = (6S)-NADPHX. Catalyzes the epimerization of the S- and R-forms of NAD(P)HX, a damaged form of NAD(P)H that is a result of enzymatic or heat-dependent hydration. This is a prerequisite for the S-specific NAD(P)H-hydrate dehydratase to allow the repair of both epimers of NAD(P)HX. The chain is NAD(P)H-hydrate epimerase from Levilactobacillus brevis (strain ATCC 367 / BCRC 12310 / CIP 105137 / JCM 1170 / LMG 11437 / NCIMB 947 / NCTC 947) (Lactobacillus brevis).